A 718-amino-acid chain; its full sequence is DNA ligase (718 aa).

Residues aspartate 44–aspartate 48, serine 93–leucine 94, and glutamate 127 each bind NAD(+). The active-site N6-AMP-lysine intermediate is the lysine 129. The NAD(+) site is built by arginine 150, glutamate 186, lysine 302, and lysine 326. Zn(2+) is bound by residues cysteine 432, cysteine 435, cysteine 456, and cysteine 462. The BRCT domain maps to threonine 640–glycine 718.

Belongs to the NAD-dependent DNA ligase family. LigA subfamily. Mg(2+) serves as cofactor. It depends on Mn(2+) as a cofactor.

It carries out the reaction NAD(+) + (deoxyribonucleotide)n-3'-hydroxyl + 5'-phospho-(deoxyribonucleotide)m = (deoxyribonucleotide)n+m + AMP + beta-nicotinamide D-nucleotide.. In terms of biological role, DNA ligase that catalyzes the formation of phosphodiester linkages between 5'-phosphoryl and 3'-hydroxyl groups in double-stranded DNA using NAD as a coenzyme and as the energy source for the reaction. It is essential for DNA replication and repair of damaged DNA. The chain is DNA ligase from Rhizobium johnstonii (strain DSM 114642 / LMG 32736 / 3841) (Rhizobium leguminosarum bv. viciae).